We begin with the raw amino-acid sequence, 656 residues long: tRNA 5-methylaminomethyl-2-thiouridine biosynthesis bifunctional protein MnmC (656 aa).

Residues 1-236 (MTDPLIPAVL…KRAMLVGRFA (236 aa)) are tRNA (mnm(5)s(2)U34)-methyltransferase. Residues 260–656 (IGTGLAGCAV…LRALRQGTVS (397 aa)) form an FAD-dependent cmnm(5)s(2)U34 oxidoreductase region.

In the N-terminal section; belongs to the methyltransferase superfamily. tRNA (mnm(5)s(2)U34)-methyltransferase family. The protein in the C-terminal section; belongs to the DAO family. The cofactor is FAD.

The protein resides in the cytoplasm. The catalysed reaction is 5-aminomethyl-2-thiouridine(34) in tRNA + S-adenosyl-L-methionine = 5-methylaminomethyl-2-thiouridine(34) in tRNA + S-adenosyl-L-homocysteine + H(+). In terms of biological role, catalyzes the last two steps in the biosynthesis of 5-methylaminomethyl-2-thiouridine (mnm(5)s(2)U) at the wobble position (U34) in tRNA. Catalyzes the FAD-dependent demodification of cmnm(5)s(2)U34 to nm(5)s(2)U34, followed by the transfer of a methyl group from S-adenosyl-L-methionine to nm(5)s(2)U34, to form mnm(5)s(2)U34. This is tRNA 5-methylaminomethyl-2-thiouridine biosynthesis bifunctional protein MnmC from Paraburkholderia xenovorans (strain LB400).